Here is a 686-residue protein sequence, read N- to C-terminus: DNA ligase (686 aa).

Residues 31–35, 80–81, and Glu-109 contribute to the NAD(+) site; these read DSEYD and SL. Lys-111 acts as the N6-AMP-lysine intermediate in catalysis. The NAD(+) site is built by Arg-132, Glu-166, Lys-280, and Lys-304. Zn(2+) contacts are provided by Cys-430, Cys-433, Cys-448, and Cys-453. The BRCT domain occupies 611–686; sequence NVEGILSGKT…IWSEQDLLDL (76 aa).

Belongs to the NAD-dependent DNA ligase family. LigA subfamily. Mg(2+) is required as a cofactor. It depends on Mn(2+) as a cofactor.

The enzyme catalyses NAD(+) + (deoxyribonucleotide)n-3'-hydroxyl + 5'-phospho-(deoxyribonucleotide)m = (deoxyribonucleotide)n+m + AMP + beta-nicotinamide D-nucleotide.. Its function is as follows. DNA ligase that catalyzes the formation of phosphodiester linkages between 5'-phosphoryl and 3'-hydroxyl groups in double-stranded DNA using NAD as a coenzyme and as the energy source for the reaction. It is essential for DNA replication and repair of damaged DNA. The protein is DNA ligase of Lactococcus lactis subsp. cremoris (strain SK11).